Reading from the N-terminus, the 740-residue chain is MPEDRPIEDSPPIGEAQTDAPAGGCPAGFGRIKPPVAGGSNXDWWPNQLNMKILQKNPDVINPLDEDFDYRSAVQNLDVDALRADIVEVMHTSQDWWPADFGHYGPLFIRMAWHAAGTYRVSDGRGGAGAGMQRFAPLNSWPDNASLDKARRLLWPVKKKYGKNLSWADLIVYAGNVALEDMGFRTAGFAFGREDRWEPEEDVYWGPEQEWLDRTKRYTGERDLENPLAAVQMGLIYVNPEGPNGNPDPQASAIDIRETFGRMAMNDVETAALIVGGHTFGKTHGNGDASLVGPEPEAAPLEEVGLGWRNPQGTGVGKDAITSGLEVTWTHTPTKWDNSFLEILYGNEWELTKSPAGANQWKPKDNGWANSVPLAHEDGKTHPSMLTSDLALRVDPIYEQITRRWLDHPEELAEEFAKAWFKLLHRDMGPVTRYLGPEVPKDTWLWQDNIPAGNDLSDDEVAKLKELIADSGLTVSQLVSTAWKAASTFRSSDLRGGANGGRIRLQPQLGWEANEPDELAQVVRKYEEIQKASGINVSFADLVVLGGNVGVEKAAKAAGFDVTVPFTPGRGDATQEETDVDSFAYLEPKADGFRNYLGKGSDLPAEFKLIDRANLLGLSAPEMTTLVGGLRVLDVNHGGTKHGVLTDKPGALTTDFFVNLLDMSTAWKPSPADDGTYIGTDRATGSPKWTGTRVDLVFASNSQLRALAEVYAEDDSKEKFVKDFVAAWTKVMDADRFDVA.

A disordered region spans residues 1-32; the sequence is MPEDRPIEDSPPIGEAQTDAPAGGCPAGFGRI. Residues 113-237 constitute a cross-link (tryptophyl-tyrosyl-methioninium (Trp-Tyr) (with M-263)); sequence WHAAGTYRVS…LAAVQMGLIY (125 aa). The active-site Proton acceptor is the His-114. Positions 237–263 form a cross-link, tryptophyl-tyrosyl-methioninium (Tyr-Met) (with W-113); the sequence is YVNPEGPNGNPDPQASAIDIRETFGRM. Residue His-278 coordinates heme b.

Belongs to the peroxidase family. Peroxidase/catalase subfamily. Homodimer or homotetramer. Heme b serves as cofactor. Post-translationally, formation of the three residue Trp-Tyr-Met cross-link is important for the catalase, but not the peroxidase activity of the enzyme.

The catalysed reaction is H2O2 + AH2 = A + 2 H2O. The enzyme catalyses 2 H2O2 = O2 + 2 H2O. Functionally, bifunctional enzyme with both catalase and broad-spectrum peroxidase activity. May play a role in the intracellular survival of mycobacteria. This chain is Catalase-peroxidase, found in Mycolicibacterium smegmatis (Mycobacterium smegmatis).